The following is a 54-amino-acid chain: UPF0391 membrane protein BMEI0373 (54 aa).

A run of 2 helical transmembrane segments spans residues 5–25 (VLVF…GIAG) and 29–48 (GIAQ…SLIA).

It belongs to the UPF0391 family.

It localises to the cell membrane. The protein is UPF0391 membrane protein BMEI0373 of Brucella melitensis biotype 1 (strain ATCC 23456 / CCUG 17765 / NCTC 10094 / 16M).